Consider the following 1165-residue polypeptide: Linoleate diol synthase (1165 aa).

Residues 104 to 448 (TDGLINDLWD…DGAFDDTELV (345 aa)) form a fatty acid alpha-dioxygenase region. H203 serves as a coordination point for heme b. D204, S219, Y221, D223, and S225 together coordinate Ca(2+). Y376 is an active-site residue. H379 provides a ligand contact to heme b. Positions 666–1161 (EVLSNQKDYK…ATTMKINWEG (496 aa)) are epoxy alcohol synthase. Residue C1080 coordinates heme. A disordered region spans residues 1114 to 1134 (RSYPASQWPGQAGRPPRDPAW).

The protein belongs to the peroxidase family. Homotetramer. Requires heme b as cofactor. Ca(2+) serves as cofactor. It depends on heme as a cofactor. In terms of processing, the N-terminus is blocked.

The enzyme catalyses (9Z,12Z)-octadecadienoate + O2 = (8R,9Z,12Z)-8-hydroperoxyoctadeca-9,12-dienoate. It catalyses the reaction (8R,9Z,12Z)-8-hydroperoxyoctadeca-9,12-dienoate = (7S,8S,9Z,12Z)-7,8-dihydroxyoctadeca-9,12-dienoate. Its function is as follows. 7,8-linoleate diol synthase is a bifunctional enzyme that converts linoleic acid (18:2n-6) into 8-hydroperoxy-8(E),12(Z)-octadecadienoic acid (8-HPODE) and then catalyzes the isomerization of the resulting hydroperoxide to 7,8-dihydroxy-9(Z),12(Z)-octadecadienoic acid (7,8-DiHODE). The protein is Linoleate diol synthase of Gaeumannomyces graminis (Turf grass take-all root rot fungus).